We begin with the raw amino-acid sequence, 209 residues long: Mitochondrial import inner membrane translocase subunit Tim23 (209 aa).

Helical transmembrane passes span 73–93, 125–145, and 172–194; these read FELAFFTIGGCCMTGAAFGAM, ALWANTLGSLALLYSAFGVII, and GGLRGAARGGLAGLTLTGLYALY.

This sequence belongs to the Tim17/Tim22/Tim23 family. In terms of assembly, component of the TIM23 complex at least composed of TIMM23, TIMM17 (TIMM17A or TIMM17B) and TIMM50; within this complex, directly interacts with TIMM50. The complex interacts with the TIMM44 component of the PAM complex and with DNAJC15. Upon mitochondrial depolarization, interacts with PINK1; the interaction is required for PINK1 accumulation at the outer mitochondrial membrane, kinase activation by autophosphorylation and PRKN recruitement to mitochondria.

The protein resides in the mitochondrion inner membrane. Essential component of the TIM23 complex, a complex that mediates the translocation of transit peptide-containing proteins across the mitochondrial inner membrane. Has a role in the activation of stress-induced mitophagy by protecting PINK1 from OMA1-mediated degradation and facilitating its accumulation at the outer mitochondrial membrane in response to depolarization. This is Mitochondrial import inner membrane translocase subunit Tim23 (TIMM23) from Bos taurus (Bovine).